Reading from the N-terminus, the 300-residue chain is MQFHSSSALVTPFKKDLSVDEAVYEALIKRQILQGMDACVPVGTTGESATLTHKEHMHCIEIAIETCKNTKTPSNSRMKVLAGVGSNATSESLSLAKFAQKVGADAILCVSPYYNRPTQQGLFEHYKTIAQSVEIPVMLYDVPSRTGVSIEVPTALKLFREVPNIKAIKEASGSLKRVAELHCYEKDFHIFSGEDSLNHSIMFSGGKGVVSVTGNLMPNLISQMVNCALKHEYQQALEIQDKLFSLHQALFVETNPIPIKMAMHLAGLIENPSYRLPLVAPSKETIKLLEKTLQQYEVIA.

Residue Thr-45 coordinates pyruvate. Tyr-140 (proton donor/acceptor) is an active-site residue. Catalysis depends on Lys-169, which acts as the Schiff-base intermediate with substrate. Val-210 contacts pyruvate.

It belongs to the DapA family. In terms of assembly, homotetramer; dimer of dimers.

It localises to the cytoplasm. It carries out the reaction L-aspartate 4-semialdehyde + pyruvate = (2S,4S)-4-hydroxy-2,3,4,5-tetrahydrodipicolinate + H2O + H(+). Its pathway is amino-acid biosynthesis; L-lysine biosynthesis via DAP pathway; (S)-tetrahydrodipicolinate from L-aspartate: step 3/4. Catalyzes the condensation of (S)-aspartate-beta-semialdehyde [(S)-ASA] and pyruvate to 4-hydroxy-tetrahydrodipicolinate (HTPA). The sequence is that of 4-hydroxy-tetrahydrodipicolinate synthase from Helicobacter acinonychis (strain Sheeba).